A 700-amino-acid chain; its full sequence is Methionine--tRNA ligase (700 aa).

The 'HIGH' region signature appears at 14-24; it reads PYANGPVHLGH. Zn(2+)-binding residues include cysteine 146, cysteine 149, cysteine 159, and cysteine 162. Residues 343-347 carry the 'KMSKS' region motif; sequence KFSKS. Lysine 346 contributes to the ATP binding site. Residues 599–700 enclose the tRNA-binding domain; the sequence is EFEKIDLRVA…GDSIVGKPVK (102 aa).

It belongs to the class-I aminoacyl-tRNA synthetase family. MetG type 1 subfamily. In terms of assembly, homodimer. Requires Zn(2+) as cofactor.

It is found in the cytoplasm. The enzyme catalyses tRNA(Met) + L-methionine + ATP = L-methionyl-tRNA(Met) + AMP + diphosphate. Its function is as follows. Is required not only for elongation of protein synthesis but also for the initiation of all mRNA translation through initiator tRNA(fMet) aminoacylation. The sequence is that of Methionine--tRNA ligase from Chloroherpeton thalassium (strain ATCC 35110 / GB-78).